We begin with the raw amino-acid sequence, 501 residues long: HMG-box protein STE11 (501 aa).

The segment covering 142–153 (PVNMVGSLSGSP) has biased composition (polar residues). Disordered stretches follow at residues 142–205 (PVNM…KRPL) and 246–293 (YAEM…SLEQ). The segment covering 192–204 (SRSGSSSSGIKRP) has biased composition (low complexity). The HMG box DNA-binding region spans 201 to 265 (IKRPLNSFML…RHAKEYPDYK (65 aa)). Basic and acidic residues predominate over residues 246–263 (YAEMAQRERERHAKEYPD).

Phosphorylated by MAPK2.

Its subcellular location is the nucleus. The protein is HMG-box protein STE11 of Pneumocystis carinii.